Reading from the N-terminus, the 121-residue chain is Putative ankyrin repeat protein L215 (121 aa).

ANK repeat units lie at residues 10-40 (QYDSILMYAASNGYDKIVKLILDKVGTSFKE) and 42-71 (IHETILLWAFQNEHYETIQLLIDHGFNKLV).

This is Putative ankyrin repeat protein L215 from Acanthamoeba polyphaga mimivirus (APMV).